The following is a 63-amino-acid chain: Sec-independent protein translocase protein TatA (63 aa).

The helical transmembrane segment at 1–21 (MGSFSMWHWLIVLVIVLLLFG) threads the bilayer. The segment at 42-63 (GMTDDDAPDTAKTVDHKADETK) is disordered. The segment covering 53-63 (KTVDHKADETK) has biased composition (basic and acidic residues).

It belongs to the TatA/E family. The Tat system comprises two distinct complexes: a TatABC complex, containing multiple copies of TatA, TatB and TatC subunits, and a separate TatA complex, containing only TatA subunits. Substrates initially bind to the TatABC complex, which probably triggers association of the separate TatA complex to form the active translocon.

The protein localises to the cell inner membrane. In terms of biological role, part of the twin-arginine translocation (Tat) system that transports large folded proteins containing a characteristic twin-arginine motif in their signal peptide across membranes. TatA could form the protein-conducting channel of the Tat system. The sequence is that of Sec-independent protein translocase protein TatA from Rhizobium etli (strain CIAT 652).